Here is a 176-residue protein sequence, read N- to C-terminus: Ribosome maturation factor RimM (176 aa).

In terms of domain architecture, PRC barrel spans 93 to 172 (EGEFFYFDVL…EILTKDAKSI (80 aa)).

It belongs to the RimM family. As to quaternary structure, binds ribosomal protein uS19.

Its subcellular location is the cytoplasm. In terms of biological role, an accessory protein needed during the final step in the assembly of 30S ribosomal subunit, possibly for assembly of the head region. Essential for efficient processing of 16S rRNA. May be needed both before and after RbfA during the maturation of 16S rRNA. It has affinity for free ribosomal 30S subunits but not for 70S ribosomes. This chain is Ribosome maturation factor RimM, found in Campylobacter curvus (strain 525.92).